Here is a 353-residue protein sequence, read N- to C-terminus: MASQTLVVFQASNQSQLPPPNATLCDGAQEAWHLLHKVLPTCVVAICSGGLLGNLFVLSVFLVPRRRLNAAEIYLAHLAASDLVFALGLPFWAETIRNGFHWPFGAPLCRVVNGVIKANLFISIFLVVAISRDRYRALVHPVASWRRRRRRHWAQATCVLIWTAGGLLSIPTFLLRSVQVVPELNVSACVLPFPHEAWAFVRTVELNVLGFLLPLAAILFFNYHILAALRGREQLSRTRCGGPRDGKTTALILTLVAVFLLCWTPYHVCAFLEFLLHVRAIRGCFWEDFTDLGLQYTNFFAFINSCLNPVIYVFWGQLFRTKIWELYHRCLPRKLTAVSSSRRKEIFQIFWRN.

Topologically, residues 1 to 41 (MASQTLVVFQASNQSQLPPPNATLCDGAQEAWHLLHKVLPT) are extracellular. N13 and N21 each carry an N-linked (GlcNAc...) asparagine glycan. The helical transmembrane segment at 42–62 (CVVAICSGGLLGNLFVLSVFL) threads the bilayer. Over 63–72 (VPRRRLNAAE) the chain is Cytoplasmic. The chain crosses the membrane as a helical span at residues 73 to 93 (IYLAHLAASDLVFALGLPFWA). The Extracellular segment spans residues 94-110 (ETIRNGFHWPFGAPLCR). A disulfide bridge connects residues C109 and C189. Residues 111 to 131 (VVNGVIKANLFISIFLVVAIS) traverse the membrane as a helical segment. Residues 132 to 154 (RDRYRALVHPVASWRRRRRRHWA) lie on the Cytoplasmic side of the membrane. Residues 155–175 (QATCVLIWTAGGLLSIPTFLL) traverse the membrane as a helical segment. Residues 176 to 207 (RSVQVVPELNVSACVLPFPHEAWAFVRTVELN) lie on the Extracellular side of the membrane. N185 carries N-linked (GlcNAc...) asparagine glycosylation. Residues 208–228 (VLGFLLPLAAILFFNYHILAA) traverse the membrane as a helical segment. Residues 229-251 (LRGREQLSRTRCGGPRDGKTTAL) lie on the Cytoplasmic side of the membrane. The chain crosses the membrane as a helical span at residues 252-272 (ILTLVAVFLLCWTPYHVCAFL). The Extracellular portion of the chain corresponds to 273 to 295 (EFLLHVRAIRGCFWEDFTDLGLQ). A helical membrane pass occupies residues 296 to 316 (YTNFFAFINSCLNPVIYVFWG). The Cytoplasmic portion of the chain corresponds to 317 to 353 (QLFRTKIWELYHRCLPRKLTAVSSSRRKEIFQIFWRN). A lipid anchor (S-palmitoyl cysteine) is attached at C330.

The protein belongs to the G-protein coupled receptor 1 family. Bradykinin receptor subfamily. BDKRB1 sub-subfamily.

Its subcellular location is the cell membrane. Its function is as follows. This is a receptor for bradykinin. Could be a factor in chronic pain and inflammation. The protein is B1 bradykinin receptor (BDKRB1) of Sus scrofa (Pig).